The primary structure comprises 60 residues: Protein K12 (60 aa).

The sequence is that of Protein K12 (K12) from Human herpesvirus 8 type P (isolate GK18) (HHV-8).